The primary structure comprises 1997 residues: Nucleoprotein TPR (1997 aa).

Coiled coils occupy residues 1-36 (QEQH…NDLL), 101-277 (EIVK…HQMT), 335-1103 (DSTE…IKTI), and 1129-1305 (AEAS…EPQE). Basic and acidic residues-rich tracts occupy residues 672-702 (SSEY…KTVE) and 1290-1305 (REQQ…EPQE). 6 disordered regions span residues 672-706 (SSEY…QMEQ), 1290-1352 (REQQ…AAVP), 1438-1529 (AFVQ…KTET), 1561-1752 (IQTS…RRQS), 1795-1832 (AIHS…ASQG), and 1870-1997 (ENPA…RSNI). 3 stretches are compositionally biased toward polar residues: residues 1306–1321 (TTRI…QPTT), 1328–1347 (SANT…SKVT), and 1446–1487 (SHAT…SSSI). Residues 1511–1529 (DQQRTKKRKEEDIEEKTET) are compositionally biased toward basic and acidic residues. Residues 1561 to 1587 (IQTSQVIESQAPEQLQNVQSTQDSLQD) show a composition bias toward polar residues. 2 stretches are compositionally biased toward acidic residues: residues 1601 to 1637 (SDEE…DSNE) and 1644 to 1667 (GNED…ETED). 3 stretches are compositionally biased toward polar residues: residues 1692–1709 (AEST…SASD), 1817–1830 (QASS…QLAS), and 1879–1899 (HASQ…TSVD). A compositionally biased stretch (acidic residues) spans 1902–1915 (AADEGDEVFVEAES). Positions 1950 to 1959 (SSSIADTSSS) are enriched in low complexity.

It belongs to the TPR family. In terms of assembly, homodimer. Part of the nuclear pore complex (NPC). Interacts with nuclear receptor KPNB1; the interaction occurs in a RanGTP-dependent manner. Associates with the Importin alpha/Importin beta receptor. In terms of tissue distribution, expressed in epithelial cells, oocytes and egg (at protein level).

It localises to the nucleus. It is found in the nucleus membrane. The protein localises to the nucleus envelope. Its subcellular location is the nuclear pore complex. The protein resides in the cytoplasm. It localises to the cytoskeleton. It is found in the spindle. The protein localises to the chromosome. Its subcellular location is the centromere. The protein resides in the kinetochore. Functionally, component of the nuclear pore complex (NPC), a complex required for the trafficking across the nuclear envelope. Functions as a scaffolding element in the nuclear phase of the NPC essential for normal nucleocytoplasmic transport of proteins and mRNAs, plays a role in the establishment of nuclear-peripheral chromatin compartmentalization in interphase, and in the mitotic spindle checkpoint signaling during mitosis. Involved in the quality control and retention of unspliced mRNAs in the nucleus. Implicated in nuclear export of mRNAs transcribed from heat shock gene promoters. May play a limited role in the regulation of nuclear protein export. May be involved in the formation and/or maintenance of NPC-associated perinuclear heterochromatin exclusion zones (HEZs). Finally, may act as a spatial regulator of the spindle-assembly checkpoint (SAC) response. The polypeptide is Nucleoprotein TPR (Xenopus laevis (African clawed frog)).